The sequence spans 99 residues: Small ribosomal subunit protein bS18 (99 aa).

Belongs to the bacterial ribosomal protein bS18 family. Part of the 30S ribosomal subunit. Forms a tight heterodimer with protein bS6.

Its function is as follows. Binds as a heterodimer with protein bS6 to the central domain of the 16S rRNA, where it helps stabilize the platform of the 30S subunit. The sequence is that of Small ribosomal subunit protein bS18 from Christiangramia forsetii (strain DSM 17595 / CGMCC 1.15422 / KT0803) (Gramella forsetii).